The chain runs to 483 residues: ATP synthase subunit beta (483 aa).

167–174 (GGAGVGKT) lines the ATP pocket.

This sequence belongs to the ATPase alpha/beta chains family. In terms of assembly, F-type ATPases have 2 components, CF(1) - the catalytic core - and CF(0) - the membrane proton channel. CF(1) has five subunits: alpha(3), beta(3), gamma(1), delta(1), epsilon(1). CF(0) has three main subunits: a(1), b(2) and c(9-12). The alpha and beta chains form an alternating ring which encloses part of the gamma chain. CF(1) is attached to CF(0) by a central stalk formed by the gamma and epsilon chains, while a peripheral stalk is formed by the delta and b chains.

It is found in the cell membrane. It carries out the reaction ATP + H2O + 4 H(+)(in) = ADP + phosphate + 5 H(+)(out). Its function is as follows. Produces ATP from ADP in the presence of a proton gradient across the membrane. The catalytic sites are hosted primarily by the beta subunits. The chain is ATP synthase subunit beta from Paenarthrobacter aurescens (strain TC1).